A 94-amino-acid chain; its full sequence is UPF0298 protein SZO_03600 (94 aa).

It belongs to the UPF0298 family.

The protein resides in the cytoplasm. This is UPF0298 protein SZO_03600 from Streptococcus equi subsp. zooepidemicus (strain H70).